The sequence spans 159 residues: ATP synthase subunit b' (159 aa).

Residues 27–47 (ATLPLMAVQFLILTVILNALL) form a helical membrane-spanning segment.

This sequence belongs to the ATPase B chain family. In terms of assembly, F-type ATPases have 2 components, F(1) - the catalytic core - and F(0) - the membrane proton channel. F(1) has five subunits: alpha(3), beta(3), gamma(1), delta(1), epsilon(1). F(0) has four main subunits: a(1), b(1), b'(1) and c(10-14). The alpha and beta chains form an alternating ring which encloses part of the gamma chain. F(1) is attached to F(0) by a central stalk formed by the gamma and epsilon chains, while a peripheral stalk is formed by the delta, b and b' chains.

Its subcellular location is the cellular thylakoid membrane. Functionally, f(1)F(0) ATP synthase produces ATP from ADP in the presence of a proton or sodium gradient. F-type ATPases consist of two structural domains, F(1) containing the extramembraneous catalytic core and F(0) containing the membrane proton channel, linked together by a central stalk and a peripheral stalk. During catalysis, ATP synthesis in the catalytic domain of F(1) is coupled via a rotary mechanism of the central stalk subunits to proton translocation. Component of the F(0) channel, it forms part of the peripheral stalk, linking F(1) to F(0). The b'-subunit is a diverged and duplicated form of b found in plants and photosynthetic bacteria. This is ATP synthase subunit b' from Synechococcus sp. (strain PCC 6716).